A 207-amino-acid polypeptide reads, in one-letter code: MSSQVMHGAAHGHDHGHDDHHHDSGQMTVLGFWLYLMTDCILFASLFATYAVLSGSFAGGPSGHDIFQLDFVAVETLFLLLSSITFGFAMLKMFDGKKAGVLGWLAVTFLFGAGFIAMEIYEFHHLIAEGFGPQRSGFLSGFFALVGTHGLHVTAGLIWMAIMMYQINKHGITPTAKTRMSCLSLFWHFLDVVWICVFTVVYLLGVL.

At 1–26 the chain is on the cytoplasmic side; it reads MSSQVMHGAAHGHDHGHDDHHHDSGQ. Residues 27-47 form a helical membrane-spanning segment; that stretch reads MTVLGFWLYLMTDCILFASLF. The Periplasmic portion of the chain corresponds to 48–70; that stretch reads ATYAVLSGSFAGGPSGHDIFQLD. Residues 71 to 91 traverse the membrane as a helical segment; the sequence is FVAVETLFLLLSSITFGFAML. Over 92 to 99 the chain is Cytoplasmic; it reads KMFDGKKA. The helical transmembrane segment at 100-120 threads the bilayer; the sequence is GVLGWLAVTFLFGAGFIAMEI. Over 121–141 the chain is Periplasmic; sequence YEFHHLIAEGFGPQRSGFLSG. Residues 142–162 traverse the membrane as a helical segment; it reads FFALVGTHGLHVTAGLIWMAI. Over 163-185 the chain is Cytoplasmic; it reads MMYQINKHGITPTAKTRMSCLSL. A helical transmembrane segment spans residues 186 to 206; the sequence is FWHFLDVVWICVFTVVYLLGV. Residue Leu207 is a topological domain, periplasmic.

It belongs to the cytochrome c oxidase subunit 3 family. As to quaternary structure, heterooctamer of two A chains, two B chains, two C chains and two D chains.

The protein localises to the cell inner membrane. Cytochrome bo(3) ubiquinol terminal oxidase is the component of the aerobic respiratory chain of E.coli that predominates when cells are grown at high aeration. Has proton pump activity across the membrane in addition to electron transfer, pumping 2 protons/electron. The chain is Cytochrome bo(3) ubiquinol oxidase subunit 3 (cyoC) from Pseudomonas putida (Arthrobacter siderocapsulatus).